Reading from the N-terminus, the 205-residue chain is uncharacterized protein (205 aa).

Residues 10 to 75 (QDLLSAVDQQ…AANLMTVMTD (66 aa)) adopt a coiled-coil conformation. The disordered stretch occupies residues 108-141 (MPLPSSNTNNDQTSPPASGKTSETPKKNPTNAMF). Residues 111–141 (PSSNTNNDQTSPPASGKTSETPKKNPTNAMF) show a composition bias toward polar residues.

Belongs to the asfivirus K205R family.

Its subcellular location is the host cytoplasm. Its function is as follows. Induces host endoplasmic reticulum stress and consequently activates autophagy and NF-kappa-B signaling pathway. In turn, may induce autophagy-mediated STING1 degradation and innate immune evasion. This is an uncharacterized protein from Ornithodoros (relapsing fever ticks).